A 230-amino-acid polypeptide reads, in one-letter code: Fibrillarin-like rRNA/tRNA 2'-O-methyltransferase (230 aa).

S-adenosyl-L-methionine-binding positions include 87–88 (TT), 105–106 (EF), 130–131 (DA), and 150–153 (DVAQ).

It belongs to the methyltransferase superfamily. Fibrillarin family. Interacts with nop5. Component of box C/D small ribonucleoprotein (sRNP) particles that contain rpl7ae, FlpA and nop5, plus a guide RNA.

In terms of biological role, involved in pre-rRNA and tRNA processing. Utilizes the methyl donor S-adenosyl-L-methionine to catalyze the site-specific 2'-hydroxyl methylation of ribose moieties in rRNA and tRNA. Site specificity is provided by a guide RNA that base pairs with the substrate. Methylation occurs at a characteristic distance from the sequence involved in base pairing with the guide RNA. The polypeptide is Fibrillarin-like rRNA/tRNA 2'-O-methyltransferase (Methanococcus maripaludis (strain DSM 14266 / JCM 13030 / NBRC 101832 / S2 / LL)).